Here is a 335-residue protein sequence, read N- to C-terminus: Glutamyl-tRNA reductase (335 aa).

Residues 60–63 (TCHR), serine 110, 115–117 (ETE), and glutamine 121 contribute to the substrate site. Residue cysteine 61 is the Nucleophile of the active site. An NADP(+)-binding site is contributed by 189–194 (GYSEIN).

Belongs to the glutamyl-tRNA reductase family. In terms of assembly, homodimer.

The catalysed reaction is (S)-4-amino-5-oxopentanoate + tRNA(Glu) + NADP(+) = L-glutamyl-tRNA(Glu) + NADPH + H(+). Its pathway is porphyrin-containing compound metabolism; protoporphyrin-IX biosynthesis; 5-aminolevulinate from L-glutamyl-tRNA(Glu): step 1/2. In terms of biological role, catalyzes the NADPH-dependent reduction of glutamyl-tRNA(Glu) to glutamate 1-semialdehyde (GSA). The polypeptide is Glutamyl-tRNA reductase (Chlamydia trachomatis serovar A (strain ATCC VR-571B / DSM 19440 / HAR-13)).